The sequence spans 418 residues: Exodeoxyribonuclease 7 large subunit (418 aa).

The protein belongs to the XseA family. Heterooligomer composed of large and small subunits.

The protein resides in the cytoplasm. It carries out the reaction Exonucleolytic cleavage in either 5'- to 3'- or 3'- to 5'-direction to yield nucleoside 5'-phosphates.. In terms of biological role, bidirectionally degrades single-stranded DNA into large acid-insoluble oligonucleotides, which are then degraded further into small acid-soluble oligonucleotides. The polypeptide is Exodeoxyribonuclease 7 large subunit (Acaryochloris marina (strain MBIC 11017)).